A 564-amino-acid polypeptide reads, in one-letter code: Pyranose 2-oxidase (564 aa).

Residues 1–25 (MPIRLSKEKINDLLQRSQGDLTSSQ) constitute a propeptide that is removed on maturation. H158 carries the post-translational modification Tele-8alpha-FAD histidine. The substrate site is built by Q392 and H394. H498 serves as the catalytic Proton acceptor. Residue N541 is part of the active site.

It belongs to the GMC oxidoreductase family. In terms of assembly, homotetramer. FAD serves as cofactor.

It carries out the reaction D-glucose + O2 = 2-dehydro-D-glucose + H2O2. Functionally, catalyzes the oxidation of various aldopyranoses and disaccharides on carbon-2 to the corresponding 2-keto sugars concomitant with the reduction of O(2) to H(2)O(2). The preferred substrate is D-glucose which is converted to 2-dehydro-D-glucose. Acts also on D-xylose, L-sorbose, D-galactose and 1,5-anhydroglucitol, a diagnostic marker of diabetes mellitus. The chain is Pyranose 2-oxidase (p2ox) from Tricholoma matsutake (Matsutake mushroom).